The sequence spans 265 residues: Small ribosomal subunit protein uS3 (265 aa).

In terms of domain architecture, KH type-2 spans 39-111 (IREFLNENFS…EVILNIIEVR (73 aa)). The segment at 224-250 (FEAGNQRRGQKRRPRNDQPVKDLNKEK) is disordered. The segment covering 238–250 (RNDQPVKDLNKEK) has biased composition (basic and acidic residues).

The protein belongs to the universal ribosomal protein uS3 family. Part of the 30S ribosomal subunit. Forms a tight complex with proteins S10 and S14.

Binds the lower part of the 30S subunit head. Binds mRNA in the 70S ribosome, positioning it for translation. The protein is Small ribosomal subunit protein uS3 of Acholeplasma laidlawii.